The sequence spans 280 residues: Diaminopimelate epimerase (280 aa).

Substrate contacts are provided by Asn13 and Asn67. The active-site Proton donor is the Cys76. Residues 77-78 (GN), Asn191, and 208-209 (ER) contribute to the substrate site. The active-site Proton acceptor is Cys218. 219–220 (GT) provides a ligand contact to substrate.

This sequence belongs to the diaminopimelate epimerase family. As to quaternary structure, homodimer.

It is found in the cytoplasm. The enzyme catalyses (2S,6S)-2,6-diaminopimelate = meso-2,6-diaminopimelate. It participates in amino-acid biosynthesis; L-lysine biosynthesis via DAP pathway; DL-2,6-diaminopimelate from LL-2,6-diaminopimelate: step 1/1. Its function is as follows. Catalyzes the stereoinversion of LL-2,6-diaminopimelate (L,L-DAP) to meso-diaminopimelate (meso-DAP), a precursor of L-lysine. The polypeptide is Diaminopimelate epimerase (Archaeoglobus fulgidus (strain ATCC 49558 / DSM 4304 / JCM 9628 / NBRC 100126 / VC-16)).